The primary structure comprises 194 residues: Lipoprotein signal peptidase (194 aa).

2 helical membrane passes run 75–95 (TIFL…MICS) and 97–117 (TIGS…NLID). Active-site residues include D126 and D144. Residues 135-155 (YSFPVFNLADCFITLGVIILM) traverse the membrane as a helical segment.

This sequence belongs to the peptidase A8 family.

Its subcellular location is the cell inner membrane. It carries out the reaction Release of signal peptides from bacterial membrane prolipoproteins. Hydrolyzes -Xaa-Yaa-Zaa-|-(S,diacylglyceryl)Cys-, in which Xaa is hydrophobic (preferably Leu), and Yaa (Ala or Ser) and Zaa (Gly or Ala) have small, neutral side chains.. Its pathway is protein modification; lipoprotein biosynthesis (signal peptide cleavage). This protein specifically catalyzes the removal of signal peptides from prolipoproteins. The sequence is that of Lipoprotein signal peptidase from Rickettsia prowazekii (strain Madrid E).